A 155-amino-acid polypeptide reads, in one-letter code: Photosystem II extrinsic protein V (155 aa).

An N-terminal signal peptide occupies residues M1 to A20. 4 residues coordinate heme c: C50, C53, H54, and H105.

This sequence belongs to the cytochrome c family. PsbV subfamily. As to quaternary structure, PSII is composed of 1 copy each of membrane proteins PsbA, PsbB, PsbC, PsbD, PsbE, PsbF, PsbH, PsbI, PsbJ, PsbK, PsbL, PsbM, PsbT, PsbY, PsbZ, Psb30/Ycf12, at least 3 peripheral proteins of the oxygen-evolving complex and a large number of cofactors. It forms dimeric complexes. The extrinsic subunits in red algae are PsbO (OEC33), PsbQ', cytochrome c-550 and PsbU. It depends on heme c as a cofactor.

The protein localises to the plastid. Its subcellular location is the chloroplast thylakoid membrane. Its function is as follows. One of the extrinsic, lumenal subunits of photosystem II (PSII). PSII is a light-driven water plastoquinone oxidoreductase, using light energy to abstract electrons from H(2)O, generating a proton gradient subsequently used for ATP formation. The extrinsic proteins stabilize the structure of photosystem II oxygen-evolving complex (OEC), the ion environment of oxygen evolution and protect the OEC against heat-induced inactivation. Unlike the T.vulcanus ortholog, it does not bind by itself to PSII, but requires all extrinsic members of the OEC. The polypeptide is Photosystem II extrinsic protein V (Cyanidium caldarium (Red alga)).